A 459-amino-acid polypeptide reads, in one-letter code: Cysteine--tRNA ligase (459 aa).

Residue cysteine 29 participates in Zn(2+) binding. Residues 31–41 (PTVYDRAHIGN) carry the 'HIGH' region motif. Positions 209, 234, and 238 each coordinate Zn(2+). The 'KMSKS' region signature appears at 267–271 (KMSKS). ATP is bound at residue lysine 270.

This sequence belongs to the class-I aminoacyl-tRNA synthetase family. As to quaternary structure, monomer. It depends on Zn(2+) as a cofactor.

The protein resides in the cytoplasm. It carries out the reaction tRNA(Cys) + L-cysteine + ATP = L-cysteinyl-tRNA(Cys) + AMP + diphosphate. The protein is Cysteine--tRNA ligase of Rhodospirillum rubrum (strain ATCC 11170 / ATH 1.1.1 / DSM 467 / LMG 4362 / NCIMB 8255 / S1).